The primary structure comprises 361 residues: Microtubule-associated protein Jupiter (361 aa).

Over residues 1-15 the composition is skewed to polar residues; it reads MISNYDITDSKSSSK. 2 disordered regions span residues 1–38 and 70–99; these read MISN…TPRN and IGDN…TPGK. S24 carries the post-translational modification Phosphoserine. A Phosphothreonine modification is found at T35. Residues 73–87 show a composition bias toward basic and acidic residues; the sequence is NPRRGQKPVDSHSRL. T96 carries the phosphothreonine modification. Position 105 is a phosphoserine (S105). Low complexity-rich tracts occupy residues 125–134 and 141–154; these read GSSTANTTNG and SGSV…VSSS. Disordered regions lie at residues 125-165 and 328-361; these read GSST…SGSR and GSTN…SGLW. Residues S143 and S154 each carry the phosphoserine modification. The span at 155 to 165 shows a compositional bias: polar residues; that stretch reads TENLKMNSGSR.

Belongs to the MAP Jupiter family.

It is found in the nucleus. The protein resides in the cytoplasm. The protein localises to the cytoskeleton. It localises to the spindle. In terms of biological role, binds to all microtubule populations. The polypeptide is Microtubule-associated protein Jupiter (Drosophila persimilis (Fruit fly)).